Reading from the N-terminus, the 429-residue chain is Xyloglucan O-acetyltransferase 1 (429 aa).

At M1–K20 the chain is on the cytoplasmic side. Residues L21–P41 form a helical; Signal-anchor for type II membrane protein membrane-spanning segment. The Lumenal segment spans residues Y42–E429. N-linked (GlcNAc...) asparagine glycans are attached at residues N46 and N89. Intrachain disulfides connect C72/C122, C93/C158, C102/C402, and C317/C398. The GDS motif signature appears at G145–S147. S147 acts as the Nucleophile in catalysis. 3 N-linked (GlcNAc...) asparagine glycosylation sites follow: N189, N263, and N351. Catalysis depends on D397, which acts as the Proton donor. The DXXH motif motif lies at D397–H400. H400 serves as the catalytic Proton acceptor.

This sequence belongs to the PC-esterase family. TBL subfamily.

It is found in the golgi apparatus membrane. In terms of biological role, xyloglucan acetyltransferase that catalyzes the acetylation of fucosylated Gal residues on xyloglucan side chains. Predominantly catalyze 6-O-monoacetylation of Gal residues in the Fuc-Gal-Xyl trisaccharide side chains of xyloglucan oligomers. The protein is Xyloglucan O-acetyltransferase 1 of Populus trichocarpa (Western balsam poplar).